Reading from the N-terminus, the 507-residue chain is Histone-lysine N-methyltransferase set-18 (507 aa).

Residues cysteine 49, cysteine 52, cysteine 65, cysteine 68, cysteine 74, cysteine 78, histidine 86, and cysteine 90 each coordinate Zn(2+). The MYND-type zinc finger occupies 49 to 90 (CANCLRGPAPGEKLLRCGGCNFSMYCSKECQATAWLVHKPEC).

The protein belongs to the class V-like SAM-binding methyltransferase superfamily. Histone-lysine methyltransferase family. In terms of tissue distribution, expressed in pharyngeal and body wall muscles.

The enzyme catalyses L-lysyl(36)-[histone H3] + 2 S-adenosyl-L-methionine = N(6),N(6)-dimethyl-L-lysyl(36)-[histone H3] + 2 S-adenosyl-L-homocysteine + 2 H(+). Its function is as follows. Histone methyltransferase. Specifically methylates 'Lys-36' of histone H3, inducing di-methylation. Plays a role in modulating lifespan and oxidative stress resistance, in a manner dependent upon daf-16/Forkhead box protein O and the Insulin/IGF-1-like signaling (IIS) mediated pathway. Represses transcription of daf-16 isoform a, perhaps by methylating histone H3 at the daf-16 promoter, which in turn leads to recruitment of histone deacetylases and thus modulation of expression. This Caenorhabditis elegans protein is Histone-lysine N-methyltransferase set-18.